The following is a 216-amino-acid chain: Adenylate kinase (216 aa).

Residue 10–15 participates in ATP binding; that stretch reads GAGKGT. Residues 30 to 59 form an NMP region; the sequence is STGDIFRKNISENTPLGIEAKGYIDNGQLV. AMP contacts are provided by residues Thr31, Arg36, 57–59, 85–88, and Gln92; these read QLV and GFPR. Residues 126–163 form an LID region; the sequence is GRRVCPSCGASYHVKFNPPTNEGKCDLCGSEVIQRKDD. Arg127 lines the ATP pocket. 2 residues coordinate Zn(2+): Cys130 and Cys133. An ATP-binding site is contributed by 136-137; sequence SY. Residues Cys150 and Cys153 each contribute to the Zn(2+) site. Residues Arg160 and Arg171 each coordinate AMP. Lys199 is an ATP binding site.

This sequence belongs to the adenylate kinase family. As to quaternary structure, monomer.

The protein localises to the cytoplasm. The catalysed reaction is AMP + ATP = 2 ADP. It participates in purine metabolism; AMP biosynthesis via salvage pathway; AMP from ADP: step 1/1. Its function is as follows. Catalyzes the reversible transfer of the terminal phosphate group between ATP and AMP. Plays an important role in cellular energy homeostasis and in adenine nucleotide metabolism. The polypeptide is Adenylate kinase (Clostridium beijerinckii (strain ATCC 51743 / NCIMB 8052) (Clostridium acetobutylicum)).